A 326-amino-acid polypeptide reads, in one-letter code: Acetyl-coenzyme A carboxylase carboxyl transferase subunit beta (326 aa).

The CoA carboxyltransferase N-terminal domain maps to 25-308; the sequence is LWVKCPASGE…RRDDRSTLQL (284 aa). A disordered region spans residues 298-326; it reads RRRDDRSTLQLTPPKTHAPKPPEPKVKPD. The segment covering 317-326 has biased composition (basic and acidic residues); sequence KPPEPKVKPD.

Belongs to the AccD/PCCB family. As to quaternary structure, acetyl-CoA carboxylase is a heterohexamer composed of biotin carboxyl carrier protein (AccB), biotin carboxylase (AccC) and two subunits each of ACCase subunit alpha (AccA) and ACCase subunit beta (AccD).

The protein resides in the cytoplasm. The catalysed reaction is N(6)-carboxybiotinyl-L-lysyl-[protein] + acetyl-CoA = N(6)-biotinyl-L-lysyl-[protein] + malonyl-CoA. It participates in lipid metabolism; malonyl-CoA biosynthesis; malonyl-CoA from acetyl-CoA: step 1/1. Functionally, component of the acetyl coenzyme A carboxylase (ACC) complex. Biotin carboxylase (BC) catalyzes the carboxylation of biotin on its carrier protein (BCCP) and then the CO(2) group is transferred by the transcarboxylase to acetyl-CoA to form malonyl-CoA. The chain is Acetyl-coenzyme A carboxylase carboxyl transferase subunit beta from Hyphomonas neptunium (strain ATCC 15444).